The chain runs to 351 residues: Cytoplasmic dynein 2 light intermediate chain 1 (351 aa).

Positions 304-335 (TLKAIQDPARDPQYAESEVDEMRVQKDQELEQ) are disordered. Residues 323-335 (DEMRVQKDQELEQ) show a composition bias toward basic and acidic residues.

The protein belongs to the dynein light intermediate chain family. As to quaternary structure, light intermediate chain of the cytoplasmic dynein complex 2, a multisubunit complex composed at least of eleven different proteins. The cytoplasmic dynein 2 complex consists of two catalytic heavy chains (HCs) and a number of non-catalytic subunits presented by intermediate chains (ICs), light intermediate chains (LICs) and light chains (LCs). Among them, a heavy chain (DYNC2H1), two intermediate chains (DYNC2I2 and DYNC2I1), a light intermediate chain (DYNC2LI1), and a light chain (DYNLT2B) are unique to the dynein-2 complex, but a subset of light chains are also shared by dynein-1 and dynein-2 complexes. Dynein-2 complex is built around two copies of cytoplasmic dynein 2 heavy chain 1 (DYNC2H1). The C-terminal region forms the motor domain, which converts the energy from ATP hydrolysis into movement. Its N-terminal region forms the tail, an extended structure that binds the other subunits and holds the two heavy chains in a homodimer. Interacts with DYNC2H1 (via N-terminus); this interaction stabilizes the dynein-2 complex structure.

The protein resides in the cytoplasm. Its subcellular location is the cell projection. It is found in the cilium. It localises to the cytoskeleton. The protein localises to the cilium basal body. The protein resides in the cilium axoneme. Its subcellular location is the microtubule organizing center. It is found in the centrosome. Functionally, acts as one of several non-catalytic accessory components of the cytoplasmic dynein 2 complex (dynein-2 complex), a motor protein complex that drives the movement of cargos along microtubules within cilia and flagella in concert with the intraflagellar transport (IFT) system, facilitating the assembly of these organelles. Involved in the regulation of ciliary length. This Rattus norvegicus (Rat) protein is Cytoplasmic dynein 2 light intermediate chain 1 (Dync2li1).